The sequence spans 81 residues: Control protein C.BamHI (81 aa).

The HTH cro/C1-type domain maps to 13-68 (VRQIRLSKSNMSQEKLAFECDLHRTYISDIERGTRNVSLDNIEKISKALGVQPKDL). The segment at residues 25–44 (QEKLAFECDLHRTYISDIER) is a DNA-binding region (H-T-H motif).

May help modulate methylase (M) and restriction enzyme (R) expression as cells undergo physiological changes such as sporulation or transformation. The chain is Control protein C.BamHI from Bacillus amyloliquefaciens (Bacillus velezensis).